The chain runs to 248 residues: Triosephosphate isomerase (248 aa).

Substrate-binding residues include N10 and K12. The Electrophile role is filled by H95. The active-site Proton acceptor is E165.

Belongs to the triosephosphate isomerase family. As to quaternary structure, homodimer.

It catalyses the reaction D-glyceraldehyde 3-phosphate = dihydroxyacetone phosphate. Its pathway is carbohydrate biosynthesis; gluconeogenesis. The protein operates within carbohydrate degradation; glycolysis; D-glyceraldehyde 3-phosphate from glycerone phosphate: step 1/1. The sequence is that of Triosephosphate isomerase (TPI1) from Kluyveromyces lactis (strain ATCC 8585 / CBS 2359 / DSM 70799 / NBRC 1267 / NRRL Y-1140 / WM37) (Yeast).